Reading from the N-terminus, the 294-residue chain is Acetyl-coenzyme A carboxylase carboxyl transferase subunit beta (294 aa).

In terms of domain architecture, CoA carboxyltransferase N-terminal spans 29–294 (LWEKCPECGQ…TQVVKLQTNA (266 aa)). 4 residues coordinate Zn(2+): C33, C36, C52, and C55. A C4-type zinc finger spans residues 33-55 (CPECGQVVYRKDLIDNCSVCSNC).

It belongs to the AccD/PCCB family. In terms of assembly, acetyl-CoA carboxylase is a heterohexamer composed of biotin carboxyl carrier protein (AccB), biotin carboxylase (AccC) and two subunits each of ACCase subunit alpha (AccA) and ACCase subunit beta (AccD). Zn(2+) serves as cofactor.

Its subcellular location is the cytoplasm. It catalyses the reaction N(6)-carboxybiotinyl-L-lysyl-[protein] + acetyl-CoA = N(6)-biotinyl-L-lysyl-[protein] + malonyl-CoA. It participates in lipid metabolism; malonyl-CoA biosynthesis; malonyl-CoA from acetyl-CoA: step 1/1. Functionally, component of the acetyl coenzyme A carboxylase (ACC) complex. Biotin carboxylase (BC) catalyzes the carboxylation of biotin on its carrier protein (BCCP) and then the CO(2) group is transferred by the transcarboxylase to acetyl-CoA to form malonyl-CoA. The sequence is that of Acetyl-coenzyme A carboxylase carboxyl transferase subunit beta from Prochlorococcus marinus (strain NATL2A).